The sequence spans 301 residues: Ribosomal protein L11 methyltransferase (301 aa).

4 residues coordinate S-adenosyl-L-methionine: Thr-152, Gly-173, Asp-195, and Asn-236.

Belongs to the methyltransferase superfamily. PrmA family.

The protein resides in the cytoplasm. The catalysed reaction is L-lysyl-[protein] + 3 S-adenosyl-L-methionine = N(6),N(6),N(6)-trimethyl-L-lysyl-[protein] + 3 S-adenosyl-L-homocysteine + 3 H(+). In terms of biological role, methylates ribosomal protein L11. This Dictyoglomus thermophilum (strain ATCC 35947 / DSM 3960 / H-6-12) protein is Ribosomal protein L11 methyltransferase.